We begin with the raw amino-acid sequence, 1404 residues long: DNA-directed RNA polymerase subunit beta' (1404 aa).

Zn(2+)-binding residues include Cys72, Cys74, Cys87, and Cys90. Residues Asp462, Asp464, and Asp466 each coordinate Mg(2+). 4 residues coordinate Zn(2+): Cys816, Cys890, Cys897, and Cys900.

Belongs to the RNA polymerase beta' chain family. The RNAP catalytic core consists of 2 alpha, 1 beta, 1 beta' and 1 omega subunit. When a sigma factor is associated with the core the holoenzyme is formed, which can initiate transcription. It depends on Mg(2+) as a cofactor. The cofactor is Zn(2+).

The enzyme catalyses RNA(n) + a ribonucleoside 5'-triphosphate = RNA(n+1) + diphosphate. Its function is as follows. DNA-dependent RNA polymerase catalyzes the transcription of DNA into RNA using the four ribonucleoside triphosphates as substrates. The sequence is that of DNA-directed RNA polymerase subunit beta' from Azoarcus sp. (strain BH72).